Reading from the N-terminus, the 365-residue chain is Serpentine receptor class epsilon-21 (365 aa).

The next 7 membrane-spanning stretches (helical) occupy residues 49-69 (ILIN…VFCI), 82-102 (IIIS…FVFI), 116-136 (LLFW…HTLL), 158-178 (VWIA…YAFL), 189-209 (IFIV…IIYF), 250-270 (VVVV…PIIL), and 292-314 (PLVV…LSYY).

This sequence belongs to the nematode receptor-like protein sre family.

The protein resides in the membrane. The sequence is that of Serpentine receptor class epsilon-21 (sre-21) from Caenorhabditis elegans.